Consider the following 353-residue polypeptide: uncharacterized protein (353 aa).

The signal sequence occupies residues 1–30 (MHLRHLFSPRLRGSLLLGSLLVASSFSTLA).

This is an uncharacterized protein from Salmonella typhimurium (strain LT2 / SGSC1412 / ATCC 700720).